Here is a 331-residue protein sequence, read N- to C-terminus: UPF0284 protein PF0303 (331 aa).

Belongs to the UPF0284 family.

In Pyrococcus furiosus (strain ATCC 43587 / DSM 3638 / JCM 8422 / Vc1), this protein is UPF0284 protein PF0303.